A 1486-amino-acid chain; its full sequence is Chromosome partition protein MukB (1486 aa).

Position 34–41 (G34–S41) interacts with ATP. 3 coiled-coil regions span residues S334 to Q418, L444 to Q480, and R509 to V603. The tract at residues P666 to R783 is flexible hinge. Coiled-coil stretches lie at residues E835–E923, E977–A1115, and V1209–S1266.

Belongs to the SMC family. MukB subfamily. In terms of assembly, homodimerization via its hinge domain. Binds to DNA via its C-terminal region. Interacts, and probably forms a ternary complex, with MukE and MukF via its C-terminal region. The complex formation is stimulated by calcium or magnesium. Interacts with tubulin-related protein FtsZ.

The protein resides in the cytoplasm. It localises to the nucleoid. Plays a central role in chromosome condensation, segregation and cell cycle progression. Functions as a homodimer, which is essential for chromosome partition. Involved in negative DNA supercoiling in vivo, and by this means organize and compact chromosomes. May achieve or facilitate chromosome segregation by condensation DNA from both sides of a centrally located replisome during cell division. The chain is Chromosome partition protein MukB from Shigella sonnei (strain Ss046).